The chain runs to 339 residues: Phosphate acyltransferase (339 aa).

Belongs to the PlsX family. Homodimer. Probably interacts with PlsY.

It localises to the cytoplasm. The catalysed reaction is a fatty acyl-[ACP] + phosphate = an acyl phosphate + holo-[ACP]. Its pathway is lipid metabolism; phospholipid metabolism. Functionally, catalyzes the reversible formation of acyl-phosphate (acyl-PO(4)) from acyl-[acyl-carrier-protein] (acyl-ACP). This enzyme utilizes acyl-ACP as fatty acyl donor, but not acyl-CoA. The polypeptide is Phosphate acyltransferase (Tolumonas auensis (strain DSM 9187 / NBRC 110442 / TA 4)).